A 605-amino-acid polypeptide reads, in one-letter code: MSRFKRGGKAPDPLSGFRAPKEQESAVPFGLIKAARKSGQLNLSARGLTEVPVSVWRINVDTPPEAHQNVDFGGSDRWWEQTDLTKLILASNKLQALSEDISLLPALVVLDIHDNQIASLPCAIRELTNLQKLNISHNKIKQLPNELQHLQNLKSFLLQHNQLEELPDSIGHLSILEELDVSNNCLRSVSSSVGQLTGLVKFNLSSNKLTALPTEIGKMKNLRQLDCTSNLLENVPASVAGMESLEQLYLRQNKLTYLPELPFLTKLKELHVGNNQIQTLGPEHLQNLSSLSVLELRYNKLKVLPKEISLLKGLERLDLSNNDIGSLPDTLGSLPNLKSLQLDGNPLRGIRRDILNKGTQELLKYLKGRVQTPDMTTQEAANPPDTAMTLPSDSVINAHAIMTLKTLEYCEKQASLIPEAVFNAAASSPITTVNFSKNQLTEVPARIVEMKDSVYDVNLGFNKISSISLNLCMLLKLTHLDMRNNALASLPPEMEALTRLQSIILSFNRFKHFPDVLYTIPNLETILISSNQIGSIDPIQLKKMTKLSTLDLQNNDLLQIPPALGNCESLRALHLEGNPFRNPRATILAKGTVAILEYLRSRIPT.

The interval 1–21 (MSRFKRGGKAPDPLSGFRAPK) is disordered. 19 LRR repeats span residues 83 to 104 (DLTK…ISLL), 106 to 127 (ALVV…IREL), 129 to 151 (NLQK…QHLQ), 152 to 173 (NLKS…IGHL), 175 to 196 (ILEE…VGQL), 198 to 219 (GLVK…IGKM), 221 to 242 (NLRQ…VAGM), 244 to 265 (SLEQ…PFLT), 266 to 287 (KLKE…HLQN), 290 to 311 (SLSV…ISLL), 313 to 335 (GLER…GSLP), 336 to 357 (NLKS…ILNK), 429 to 450 (PITT…IVEM), 453 to 475 (SVYD…CMLL), 476 to 497 (KLTH…MEAL), 499 to 520 (RLQS…LYTI), 522 to 543 (NLET…QLKK), 546 to 567 (KLST…LGNC), and 569 to 590 (SLRA…ILAK).

This is Leucine-rich repeat-containing protein 40 (lrrc40) from Xenopus laevis (African clawed frog).